A 278-amino-acid chain; its full sequence is DNA repair protein XRCC2 (278 aa).

Residue serine 10 is modified to Phosphoserine.

Belongs to the RecA family. RAD51 subfamily. As to quaternary structure, interacts with RAD51D. Part of the BCDX2 complex consisting of RAD51B, RAD51C, RAD51D and XRCC2; the complex has a ring-like structure arranged into a flat disk around a central channel. In the absence of DNA, the BCDX2 subcomplex XRCC2:RAD51D formed a multimeric ring structure; in the presence of single-stranded DNA it formed a filamentous structure with the ssDNA. In terms of tissue distribution, expressed at low level in somatic tissues and at high level in testis.

Its subcellular location is the nucleus. Its function is as follows. Involved in the homologous recombination repair (HRR) pathway of double-stranded DNA, thought to repair chromosomal fragmentation, translocations and deletions. Part of the RAD51 paralog protein complex BCDX2 which acts in the BRCA1-BRCA2-dependent HR pathway. Upon DNA damage, BCDX2 acts downstream of BRCA2 recruitment and upstream of RAD51 recruitment. BCDX2 binds predominantly to the intersection of the four duplex arms of the Holliday junction and to junction of replication forks. The BCDX2 complex was originally reported to bind single-stranded DNA, single-stranded gaps in duplex DNA and specifically to nicks in duplex DNA. This Mus musculus (Mouse) protein is DNA repair protein XRCC2 (Xrcc2).